The chain runs to 376 residues: Germination-specific cysteine protease 1 (376 aa).

The first 22 residues, 1–22, serve as a signal peptide directing secretion; it reads MAPSTKVLSLLLLYVVVSLASG. Positions 23–144 are cleaved as a propeptide — activation peptide; it reads DESIINDHLQ…KYSAAVNGKE (122 aa). Asn-93 carries N-linked (GlcNAc...) asparagine glycosylation. Disulfide bonds link Cys-166-Cys-208, Cys-200-Cys-241, and Cys-299-Cys-351. Cys-169 is an active-site residue. Catalysis depends on residues His-305 and Asn-325.

Belongs to the peptidase C1 family.

Its function is as follows. Probable thiol protease. This chain is Germination-specific cysteine protease 1, found in Arabidopsis thaliana (Mouse-ear cress).